We begin with the raw amino-acid sequence, 425 residues long: MYPSNKKKKVWREEKERLLKMTLEERRKEYLRDYIPLNSILSWKEEMKGKGQNDEENTQETSQVKKSLTEKVSLYRGDITLLEVDAIVNAANASLLGGGGVDGCIHRAAGPCLLAECRNLNGCDTGHAKITCGYDLPAKYVIHTVGPIARGHINGSHKEDLANCYKSSLKLVKENNIRSVAFPCISTGIYGFPNEPAAVIALNTIKEWLAKNHHEVDRIIFCVFLEVDFKIYKKKMNEFFSVDDNNEEEEDVEMKEDSDENGPEEKQSVEEMEEQSQDADGVNTVTVPGPASEEAVEDCKDEDFAKDENITKGGEVTDHSVRDQDHPDGQENDSTKNEIKIETESQSSYMETEELSSNQEDAVIVEQPEVIPLTEDQEEKEGEKAPGEDTPRMPGKSEGSSDLENTPGPDAGAQDEAKEQRNGTK.

Residues 59-240 enclose the Macro domain; the sequence is QETSQVKKSL…IYKKKMNEFF (182 aa). Substrate contacts are provided by residues 77–79, 90–92, and 97–102; these read GDI, AAN, and GGGGVD. A Glycyl lysine isopeptide (Lys-Gly) (interchain with G-Cter in ubiquitin) cross-link involves residue Lys170. Residues 185–191 and Phe224 each bind substrate; that span reads ISTGIYG. The segment at 243 to 425 is disordered; sequence DDNNEEEEDV…EAKEQRNGTK (183 aa). Residues 244–262 show a composition bias toward acidic residues; the sequence is DNNEEEEDVEMKEDSDENG. Basic and acidic residues predominate over residues 302 to 343; sequence EDFAKDENITKGGEVTDHSVRDQDHPDGQENDSTKNEIKIET. The span at 344–360 shows a compositional bias: polar residues; that stretch reads ESQSSYMETEELSSNQE. 2 stretches are compositionally biased toward basic and acidic residues: residues 381–391 and 415–425; these read EGEKAPGEDTP and DEAKEQRNGTK.

Belongs to the MacroD-type family. MacroD1/2-like subfamily. In terms of assembly, interacts with ADP-ribosylated PARP1.

The protein localises to the nucleus. The enzyme catalyses 2''-O-acetyl-ADP-D-ribose + H2O = ADP-D-ribose + acetate + H(+). It catalyses the reaction 4-O-(ADP-D-ribosyl)-L-aspartyl-[protein] + H2O = L-aspartyl-[protein] + ADP-D-ribose + H(+). It carries out the reaction 5-O-(ADP-D-ribosyl)-L-glutamyl-[protein] + H2O = L-glutamyl-[protein] + ADP-D-ribose + H(+). The catalysed reaction is alpha-NAD(+) + H2O = ADP-D-ribose + nicotinamide + H(+). Subject to product inhibition by ADP-ribose. Removes ADP-ribose from aspartate and glutamate residues in proteins bearing a single ADP-ribose moiety. Inactive towards proteins bearing poly-ADP-ribose. Deacetylates O-acetyl-ADP ribose, a signaling molecule generated by the deacetylation of acetylated lysine residues in histones and other proteins. The sequence is that of ADP-ribose glycohydrolase MACROD2 from Homo sapiens (Human).